Consider the following 445-residue polypeptide: Methyl-CpG-binding domain protein 4-like protein (445 aa).

The active site involves Asp-429.

Isoform 1 and isoform 4: Expressed in leaves and flowers, but not in roots or stems.

It localises to the nucleus. In terms of biological role, monofunctional DNA glycosylase targeting U:G and T:G mispairs. Excises uracil derivatives and exhibits a preference for a CpG sequence context, irrespective of the methylation status of the complementary strand. The activity follows a biphasic kinetics, with an initial burst of product accumulation followed by a slower phase. Specifically binds its reaction product. Triggers the base excision repair (BER) pathway. The chain is Methyl-CpG-binding domain protein 4-like protein from Arabidopsis thaliana (Mouse-ear cress).